We begin with the raw amino-acid sequence, 445 residues long: Proline--tRNA ligase (445 aa).

Belongs to the class-II aminoacyl-tRNA synthetase family. ProS type 2 subfamily. Homodimer.

The protein resides in the cytoplasm. It catalyses the reaction tRNA(Pro) + L-proline + ATP = L-prolyl-tRNA(Pro) + AMP + diphosphate. Catalyzes the attachment of proline to tRNA(Pro) in a two-step reaction: proline is first activated by ATP to form Pro-AMP and then transferred to the acceptor end of tRNA(Pro). This Dinoroseobacter shibae (strain DSM 16493 / NCIMB 14021 / DFL 12) protein is Proline--tRNA ligase.